The primary structure comprises 309 residues: MSTRELVVLGTASQAPTRTRNHNGYVLRWDDEVILFDPGEGSQRQLLYSSVTATDLTRICVTHFHGDHCLGLPGTIQRLSLDRVPHPVAVHFPAGGADYFTRLRYASSFHETAELAVMPIDTDGQQIAVRNGTLEARRLRHPIETYGYRLVEPDGCRMLPERLSAHGIAGPAVGELLRVGHLDVNGRRVTRAEVSAPRPGQRFAFVMDTGLCDAVYALAEHADLLVIESTFLASETALAAEVGHLTAAQAARVATESGVRRLVLTHFSQRYPDLSRFAAEAREHFTGDLVIAEELMTVGIPPRRVPSAG.

Residues His63, His65, Asp67, His68, His141, Asp208, and His266 each contribute to the Zn(2+) site. The active-site Proton acceptor is Asp67.

The protein belongs to the RNase Z family. As to quaternary structure, homodimer. It depends on Zn(2+) as a cofactor.

It catalyses the reaction Endonucleolytic cleavage of RNA, removing extra 3' nucleotides from tRNA precursor, generating 3' termini of tRNAs. A 3'-hydroxy group is left at the tRNA terminus and a 5'-phosphoryl group is left at the trailer molecule.. Functionally, zinc phosphodiesterase, which displays some tRNA 3'-processing endonuclease activity. Probably involved in tRNA maturation, by removing a 3'-trailer from precursor tRNA. This chain is Ribonuclease Z, found in Salinispora arenicola (strain CNS-205).